The sequence spans 279 residues: Ribonuclease Z (279 aa).

The Zn(2+) site is built by His64, His66, Asp68, His69, His134, Asp191, and His245. The active-site Proton acceptor is the Asp68.

It belongs to the RNase Z family. Homodimer. Requires Zn(2+) as cofactor.

It carries out the reaction Endonucleolytic cleavage of RNA, removing extra 3' nucleotides from tRNA precursor, generating 3' termini of tRNAs. A 3'-hydroxy group is left at the tRNA terminus and a 5'-phosphoryl group is left at the trailer molecule.. In terms of biological role, zinc phosphodiesterase, which displays some tRNA 3'-processing endonuclease activity. Probably involved in tRNA maturation, by removing a 3'-trailer from precursor tRNA. The polypeptide is Ribonuclease Z (Methanopyrus kandleri (strain AV19 / DSM 6324 / JCM 9639 / NBRC 100938)).